A 697-amino-acid polypeptide reads, in one-letter code: Elongation factor G (697 aa).

In terms of domain architecture, tr-type G spans 8-283 (EHIRNIGICA…AVVDFLPSPT (276 aa)). GTP-binding positions include 17 to 24 (AHIDAGKT), 81 to 85 (DTPGH), and 135 to 138 (NKMD).

Belongs to the TRAFAC class translation factor GTPase superfamily. Classic translation factor GTPase family. EF-G/EF-2 subfamily.

It is found in the cytoplasm. In terms of biological role, catalyzes the GTP-dependent ribosomal translocation step during translation elongation. During this step, the ribosome changes from the pre-translocational (PRE) to the post-translocational (POST) state as the newly formed A-site-bound peptidyl-tRNA and P-site-bound deacylated tRNA move to the P and E sites, respectively. Catalyzes the coordinated movement of the two tRNA molecules, the mRNA and conformational changes in the ribosome. The polypeptide is Elongation factor G (Rickettsia rhipicephali).